The chain runs to 225 residues: Thymidine kinase (225 aa).

15–22 (GSMFSGKT) is a binding site for ATP. A disordered region spans residues 85–110 (KKQNHRTTTQCRSGDGTNNPGGVIPS). Residues 90–104 (RTTTQCRSGDGTNNP) show a composition bias toward polar residues. 121 to 124 (DEAN) provides a ligand contact to ATP. Residue glutamate 122 is the Proton acceptor of the active site. Cysteine 178, cysteine 181, cysteine 216, and cysteine 219 together coordinate Zn(2+).

The protein belongs to the thymidine kinase family. In terms of assembly, homotetramer.

It is found in the cytoplasm. The catalysed reaction is thymidine + ATP = dTMP + ADP + H(+). The sequence is that of Thymidine kinase from Haloquadratum walsbyi (strain DSM 16790 / HBSQ001).